A 945-amino-acid chain; its full sequence is Leucine--tRNA ligase (945 aa).

The short motif at P43 to H53 is the 'HIGH' region element. The 'KMSKS' region motif lies at K638–S642. Residue K641 participates in ATP binding.

Belongs to the class-I aminoacyl-tRNA synthetase family.

It is found in the cytoplasm. The enzyme catalyses tRNA(Leu) + L-leucine + ATP = L-leucyl-tRNA(Leu) + AMP + diphosphate. This Pyrobaculum neutrophilum (strain DSM 2338 / JCM 9278 / NBRC 100436 / V24Sta) (Thermoproteus neutrophilus) protein is Leucine--tRNA ligase.